Consider the following 117-residue polypeptide: Putative small ubiquitin-related modifier 6 (117 aa).

Positions 1–30 are disordered; it reads MSTKSSSIHGRNEVKMEGEKRKDVESESTH. A compositionally biased stretch (basic and acidic residues) spans 10–28; that stretch reads GRNEVKMEGEKRKDVESES. The 78-residue stretch at 31–108 folds into the Ubiquitin-like domain; that stretch reads VTLNVKGQDE…IDALLPQESG (78 aa). G108 is covalently cross-linked (Glycyl lysine isopeptide (Gly-Lys) (interchain with K-? in acceptor proteins)).

Belongs to the ubiquitin family. SUMO subfamily. As to quaternary structure, interacts with SAE2, SCE1, SIZ1 and MMS21 Covalently attached to a number of proteins.

It localises to the nucleus. The protein localises to the cytoplasm. In terms of biological role, ubiquitin-like protein which can be covalently attached to target lysines as a monomer. Does not seem to be involved in protein degradation and may function as an antagonist of ubiquitin in the degradation process. The chain is Putative small ubiquitin-related modifier 6 (SUMO6) from Arabidopsis thaliana (Mouse-ear cress).